Here is a 459-residue protein sequence, read N- to C-terminus: tRNA modification GTPase MnmE (459 aa).

Positions 20, 85, and 124 each coordinate (6S)-5-formyl-5,6,7,8-tetrahydrofolate. In terms of domain architecture, TrmE-type G spans 221-380 (GLSTVIIGRP…LEEAIQSLFY (160 aa)). Asparagine 231 is a binding site for K(+). Residues 231-236 (NVGKSS), 250-256 (TDIPGTT), and 275-278 (DTAG) contribute to the GTP site. Residue serine 235 coordinates Mg(2+). Threonine 250, isoleucine 252, and threonine 255 together coordinate K(+). Residue threonine 256 participates in Mg(2+) binding. Position 459 (lysine 459) interacts with (6S)-5-formyl-5,6,7,8-tetrahydrofolate.

The protein belongs to the TRAFAC class TrmE-Era-EngA-EngB-Septin-like GTPase superfamily. TrmE GTPase family. In terms of assembly, homodimer. Heterotetramer of two MnmE and two MnmG subunits. The cofactor is K(+).

It localises to the cytoplasm. Its function is as follows. Exhibits a very high intrinsic GTPase hydrolysis rate. Involved in the addition of a carboxymethylaminomethyl (cmnm) group at the wobble position (U34) of certain tRNAs, forming tRNA-cmnm(5)s(2)U34. The polypeptide is tRNA modification GTPase MnmE (Bacillus velezensis (strain DSM 23117 / BGSC 10A6 / LMG 26770 / FZB42) (Bacillus amyloliquefaciens subsp. plantarum)).